A 1402-amino-acid chain; its full sequence is Defective in tip formation protein A (1402 aa).

4 disordered regions span residues 1–20 (MKDIEASKKPHTTTVAPPQI), 37–94 (NVTT…PQIV), 109–133 (NTPSLSSTPSPLPNNNNSNENDNDI), and 210–292 (KQSS…RRLK). 2 consecutive repeat copies span residues 12 to 18 (TTTVAPP) and 40 to 46 (TTTVQPP). A 4 X 7 AA repeat of T-T-T-[IV]-[AQ]-P-P region spans residues 12–92 (TTTVAPPQIN…TTTTTVQPPQ (81 aa)). Residues 38-47 (VTTTTVQPPQ) show a composition bias toward low complexity. The span at 48 to 58 (IVSPPSPPSPP) shows a compositional bias: pro residues. Low complexity predominate over residues 59-94 (QTTTIAPPTILPTTKTTTTTTTTTTTTTTVQPPQIV). 2 repeat units span residues 60–66 (TTTIAPP) and 86–92 (TTVQPPQ). A compositionally biased stretch (low complexity) spans 210-234 (KQSSQSQLQQQLSSQSLQQIQQKSK). Pro residues predominate over residues 235-253 (QPPPQQQQQQQPPPPPIPL). The segment covering 254–279 (LPQIHQQLKPKQQQEQQQQQEQQQQQ) has biased composition (low complexity). Positions 350-383 (QRIKSFIENHKKKKQKYREYQSEKNQQQKSNSKK) form a coiled coil. Disordered stretches follow at residues 429–453 (DQQQQQQQQQQSTMTTTSSSSSPMT) and 712–745 (NNNNNNINNNNNNNNNNNNNNNNNNNNNNSNLSN). A compositionally biased stretch (low complexity) spans 430–453 (QQQQQQQQQQSTMTTTSSSSSPMT).

It localises to the cell surface. Functionally, required for correct organization of the actin cytoskeleton and cytokinesis. Also required for apical sorting of prestalk cells, a prerequisite for formation of the tip at the mound stage and subsequent formation of the fruiting body. May be required for cell adhesion. This is Defective in tip formation protein A (dtfA) from Dictyostelium discoideum (Social amoeba).